A 124-amino-acid chain; its full sequence is Small ribosomal subunit protein bS16 (124 aa).

The tract at residues 82 to 124 is disordered; that stretch reads LAKRPARSNPTKAVPGKKAQERAAEAKQKAEDAAAAAAESAAE. Over residues 99 to 113 the composition is skewed to basic and acidic residues; it reads KAQERAAEAKQKAED. Residues 114-124 show a composition bias toward low complexity; sequence AAAAAAESAAE.

It belongs to the bacterial ribosomal protein bS16 family.

This Sinorhizobium fredii (strain NBRC 101917 / NGR234) protein is Small ribosomal subunit protein bS16.